Reading from the N-terminus, the 337-residue chain is Dihydroorotate dehydrogenase (quinone) (337 aa).

Residues 62–66 (AGLDK) and T86 contribute to the FMN site. K66 is a binding site for substrate. 111-115 (NRMGF) serves as a coordination point for substrate. 2 residues coordinate FMN: N140 and N173. N173 lines the substrate pocket. The active-site Nucleophile is the S176. N178 contacts substrate. Positions 218 and 246 each coordinate FMN. Substrate is bound at residue 247 to 248 (NT). FMN contacts are provided by residues G269, G298, and 319–320 (YS).

This sequence belongs to the dihydroorotate dehydrogenase family. Type 2 subfamily. Monomer. The cofactor is FMN.

The protein localises to the cell membrane. The enzyme catalyses (S)-dihydroorotate + a quinone = orotate + a quinol. The protein operates within pyrimidine metabolism; UMP biosynthesis via de novo pathway; orotate from (S)-dihydroorotate (quinone route): step 1/1. Functionally, catalyzes the conversion of dihydroorotate to orotate with quinone as electron acceptor. This chain is Dihydroorotate dehydrogenase (quinone), found in Wigglesworthia glossinidia brevipalpis.